The chain runs to 663 residues: Transmembrane 9 superfamily member 2 (663 aa).

An N-terminal signal peptide occupies residues 1–28 (MSSRPPASLPARGPRLLLLSLLLLGTVP). Topologically, residues 29 to 300 (GPRPGSAFYL…LESMPHTHIQ (272 aa)) are lumenal. The chain crosses the membrane as a helical span at residues 301-321 (WFSIMNSLVIVLFLSGMVAMI). The Cytoplasmic segment spans residues 322 to 374 (MLRTLHKDIARYNQMDSTEDAQEEFGWKLVHGDIFRPPRKGMLLSVFLGSGTQ). Residues 375–395 (ILIMTFVTLFFACLGFLSPAN) form a helical membrane-spanning segment. Residues 396-398 (RGA) are Lumenal-facing. A helical transmembrane segment spans residues 399 to 419 (LMTCAVVLWVLLGTPAGYVAA). Topologically, residues 420-437 (RFYKSFGGEKWKTNVLLT) are cytoplasmic. A helical transmembrane segment spans residues 438 to 458 (SFLCPGIVFADFFIMNLILWG). At 459–466 (EGSSAAIP) the chain is on the lumenal side. The chain crosses the membrane as a helical span at residues 467–487 (FGTLVAILALWFCISVPLTFI). The Cytoplasmic segment spans residues 488-522 (GAYFGFKKNAIEHPVRTNQIPRQIPEQSFYTKPLP). The chain crosses the membrane as a helical span at residues 523–543 (GIIMGGILPFGCIFIQLFFIL). Topologically, residues 544–554 (NSIWSHQMYYM) are lumenal. The chain crosses the membrane as a helical span at residues 555 to 575 (FGFLFLVFIILVITCSEATIL). The Cytoplasmic portion of the chain corresponds to 576–591 (LCYFHLCAEDYHWQWR). A helical membrane pass occupies residues 592 to 612 (SFLTSGFTAVYFLVYAIHYFF). Residues 613 to 631 (SKLQITGTASTILYFGYTM) lie on the Lumenal side of the membrane. Residues 632 to 652 (IMVLIFFLFTGTIGFFACFWF) traverse the membrane as a helical segment. Residues 653–663 (VTKIYSVVKVD) lie on the Cytoplasmic side of the membrane.

This sequence belongs to the nonaspanin (TM9SF) (TC 9.A.2) family.

It is found in the endosome membrane. The protein localises to the golgi outpost. The protein resides in the cytoplasm. It localises to the cytoskeleton. Its subcellular location is the microtubule organizing center. Functionally, in the intracellular compartments, may function as a channel or small molecule transporter. The polypeptide is Transmembrane 9 superfamily member 2 (Tm9sf2) (Rattus norvegicus (Rat)).